The chain runs to 333 residues: Ferrochelatase (333 aa).

Residues His202 and Glu284 each contribute to the Fe cation site.

It belongs to the ferrochelatase family.

Its subcellular location is the cytoplasm. It catalyses the reaction heme b + 2 H(+) = protoporphyrin IX + Fe(2+). It functions in the pathway porphyrin-containing compound metabolism; protoheme biosynthesis; protoheme from protoporphyrin-IX: step 1/1. Functionally, catalyzes the ferrous insertion into protoporphyrin IX. The chain is Ferrochelatase from Francisella tularensis subsp. mediasiatica (strain FSC147).